The sequence spans 868 residues: Protein NIP100 (868 aa).

One can recognise a CAP-Gly domain in the interval 34–84; that stretch reads GETQFAKGIWYGIELDKPLGKNDGSANGIRYFDIDLKKANSNGGYYGLFCK. 3 coiled-coil regions span residues 101-175, 207-375, and 645-776; these read LNGN…HLDN, LDQT…QEEL, and SLLS…QIKE.

In terms of assembly, component of the dynactin complex composed of at least ARP1, JNM1, NIP100 and ARP10. Dynactin comprises a short rod of the ARP1 filament attached to ARP10 at its pointed-end and probably associated with the capping protein at its barbed-end. The rod is implicated in dynein cargo binding. A sidearm formed by NIP100 projects from the ARP1 filament and is implicated in motor binding.

It localises to the cytoplasm. It is found in the cytoskeleton. The protein resides in the spindle pole. Motor-binding component of the dynactin complex which assists cytoplasmic dynein by increasing its processivity and by regulation of its cargo binding. The dynactin complex is required for the spindle translocation late in anaphase and is involved in a cell wall synthesis checkpoint. The sequence is that of Protein NIP100 (NIP100) from Saccharomyces cerevisiae (strain ATCC 204508 / S288c) (Baker's yeast).